The sequence spans 325 residues: Lactonase drp35 (325 aa).

Residues E46, S108, G110, E128, T131, Y133, D136, N183, D234, and S235 each contribute to the Ca(2+) site. The active-site Proton donor is D234.

Belongs to the SMP-30/CGR1 family. Ca(2+) serves as cofactor.

Its subcellular location is the cytoplasm. Its function is as follows. Exhibits lactonase activity. Acts in cells with perturbed membrane integrity and is possibly related to the membrane homeostasis. This is Lactonase drp35 (drp35) from Staphylococcus haemolyticus (strain JCSC1435).